Reading from the N-terminus, the 171-residue chain is Macro domain-containing protein RSc0334 (171 aa).

The Macro domain occupies 1–171 (MPIPTVTLRA…LYETALNEAR (171 aa)).

This sequence belongs to the MacroD-type family.

The sequence is that of Macro domain-containing protein RSc0334 from Ralstonia nicotianae (strain ATCC BAA-1114 / GMI1000) (Ralstonia solanacearum).